Consider the following 311-residue polypeptide: Apulose-4-phosphate transketolase subunit B (311 aa).

It belongs to the transketolase family. As to quaternary structure, probable heterodimer composed of AptA and AptB. Requires thiamine diphosphate as cofactor.

The catalysed reaction is apulose 4-phosphate + D-glyceraldehyde 3-phosphate = D-xylulose 5-phosphate + dihydroxyacetone phosphate. The protein operates within carbohydrate metabolism. Functionally, involved in catabolism of D-apiose. Catalyzes the transfer of the glycolaldehyde group from apulose-4-phosphate to D-glyceraldehyde 3-phosphate, generating dihydroxyacetone phosphate and D-xylulose-5-phosphate. This is Apulose-4-phosphate transketolase subunit B from Actinobacillus succinogenes (strain ATCC 55618 / DSM 22257 / CCUG 43843 / 130Z).